We begin with the raw amino-acid sequence, 261 residues long: 5'-nucleotidase SurE (261 aa).

A divalent metal cation is bound by residues D8, D9, S39, and N94.

This sequence belongs to the SurE nucleotidase family. A divalent metal cation is required as a cofactor.

The protein resides in the cytoplasm. The enzyme catalyses a ribonucleoside 5'-phosphate + H2O = a ribonucleoside + phosphate. Functionally, nucleotidase that shows phosphatase activity on nucleoside 5'-monophosphates. This Methanopyrus kandleri (strain AV19 / DSM 6324 / JCM 9639 / NBRC 100938) protein is 5'-nucleotidase SurE.